The following is a 99-amino-acid chain: Aspartyl/glutamyl-tRNA(Asn/Gln) amidotransferase subunit C (99 aa).

It belongs to the GatC family. In terms of assembly, heterotrimer of A, B and C subunits.

It carries out the reaction L-glutamyl-tRNA(Gln) + L-glutamine + ATP + H2O = L-glutaminyl-tRNA(Gln) + L-glutamate + ADP + phosphate + H(+). The catalysed reaction is L-aspartyl-tRNA(Asn) + L-glutamine + ATP + H2O = L-asparaginyl-tRNA(Asn) + L-glutamate + ADP + phosphate + 2 H(+). Functionally, allows the formation of correctly charged Asn-tRNA(Asn) or Gln-tRNA(Gln) through the transamidation of misacylated Asp-tRNA(Asn) or Glu-tRNA(Gln) in organisms which lack either or both of asparaginyl-tRNA or glutaminyl-tRNA synthetases. The reaction takes place in the presence of glutamine and ATP through an activated phospho-Asp-tRNA(Asn) or phospho-Glu-tRNA(Gln). The protein is Aspartyl/glutamyl-tRNA(Asn/Gln) amidotransferase subunit C of Solibacter usitatus (strain Ellin6076).